The sequence spans 86 residues: MNSLLIITACLVLIGTVWAKDGYLVDVKGCKKNCYKLGENDYCNRECKMKHRGGSYGYCYGFGCYCEGLSDSTPTWPLPNKRCGGK.

A signal peptide spans 1–19; the sequence is MNSLLIITACLVLIGTVWA. Residues 20 to 84 enclose the LCN-type CS-alpha/beta domain; the sequence is KDGYLVDVKG…TWPLPNKRCG (65 aa). 4 disulfide bridges follow: Cys-30-Cys-83, Cys-34-Cys-59, Cys-43-Cys-64, and Cys-47-Cys-66.

The protein belongs to the long (4 C-C) scorpion toxin superfamily. Sodium channel inhibitor family. Beta subfamily. Expressed by the venom gland.

Its subcellular location is the secreted. Functionally, beta toxins bind voltage-independently at site-4 of sodium channels (Nav) and shift the voltage of activation toward more negative potentials thereby affecting sodium channel activation and promoting spontaneous and repetitive firing. The polypeptide is Toxin CngtIV (Centruroides noxius (Mexican scorpion)).